Reading from the N-terminus, the 299-residue chain is Diaminopimelate epimerase (299 aa).

Residues N15, Q47, and N67 each coordinate substrate. Residue C76 is the Proton donor of the active site. Substrate contacts are provided by residues 77 to 78 (GN), N163, N197, and 215 to 216 (ER). C224 acts as the Proton acceptor in catalysis. Position 225 to 226 (225 to 226 (GS)) interacts with substrate.

Belongs to the diaminopimelate epimerase family. Homodimer.

The protein resides in the cytoplasm. It catalyses the reaction (2S,6S)-2,6-diaminopimelate = meso-2,6-diaminopimelate. It functions in the pathway amino-acid biosynthesis; L-lysine biosynthesis via DAP pathway; DL-2,6-diaminopimelate from LL-2,6-diaminopimelate: step 1/1. Functionally, catalyzes the stereoinversion of LL-2,6-diaminopimelate (L,L-DAP) to meso-diaminopimelate (meso-DAP), a precursor of L-lysine and an essential component of the bacterial peptidoglycan. This Agrobacterium fabrum (strain C58 / ATCC 33970) (Agrobacterium tumefaciens (strain C58)) protein is Diaminopimelate epimerase.